The chain runs to 322 residues: N-acetyl-gamma-glutamyl-phosphate reductase 2 (322 aa).

Cys117 is a catalytic residue.

This sequence belongs to the NAGSA dehydrogenase family. Type 2 subfamily.

It localises to the cytoplasm. It carries out the reaction N-acetyl-L-glutamate 5-semialdehyde + phosphate + NADP(+) = N-acetyl-L-glutamyl 5-phosphate + NADPH + H(+). It functions in the pathway amino-acid biosynthesis; L-arginine biosynthesis; N(2)-acetyl-L-ornithine from L-glutamate: step 3/4. Catalyzes the NADPH-dependent reduction of N-acetyl-5-glutamyl phosphate to yield N-acetyl-L-glutamate 5-semialdehyde. This is N-acetyl-gamma-glutamyl-phosphate reductase 2 from Nostoc sp. (strain PCC 7120 / SAG 25.82 / UTEX 2576).